Consider the following 434-residue polypeptide: MSDLHELCGFQTRPIGPKYIEDLKFYLKNGIPATYTIEEAYNYTNNIEEEPTTTTTPLHIICSHIPNDASNDEIDIINQMVEILLEYGAGWCLTDINDDTPGCILIRRKLNNTPIYNQVVAAGVRAELLLRKVSEYDMEIIEDTDDLNHEQFEGIQGEETTEEERKEEEPSNTSDIIDEQKVEQPKEDLKEDPSSNQETYLKTKLEYKDGALVTKDRKDGVMMSWETDLMRMGCDSLFKGASIDGEIDDEVNILNIGFGMGIIDTMINNKNPTKQYICEAHPDVLAKLRLDGWYEKQNVVILEGRWQEQLNKLLSEGNVFFNGIYYDTYSEHYEDMLELFDIVVGILKPHGVFSFFNGLGADRQVVYEVYKQLVEMDLANYGLICKFEQIEVPESTLQLEVQNSTDNKSVWDDIKRAYWTCPTYYHPEARFMDV.

A disordered region spans residues 155-198; it reads IQGEETTEEERKEEEPSNTSDIIDEQKVEQPKEDLKEDPSSNQE. A compositionally biased stretch (basic and acidic residues) spans 178 to 193; that stretch reads DEQKVEQPKEDLKEDP. An RMT2 domain is found at 193–434; sequence PSSNQETYLK…YHPEARFMDV (242 aa). S-adenosyl-L-methionine is bound by residues Tyr200, Met230, 258–263, 279–281, 306–307, and Asp327; these read FGMGII, EAH, and WQ.

This sequence belongs to the class I-like SAM-binding methyltransferase superfamily. RMT2 methyltransferase family. As to quaternary structure, monomer.

The protein resides in the cytoplasm. Its subcellular location is the nucleus. S-adenosyl-L-methionine-dependent protein-arginine N-methyltransferase that methylates the delta-nitrogen atom of arginine residues to form N5-methylarginine (type IV) in target proteins. Monomethylates ribosomal protein L12. This is Protein arginine N-methyltransferase 2 from Debaryomyces hansenii (strain ATCC 36239 / CBS 767 / BCRC 21394 / JCM 1990 / NBRC 0083 / IGC 2968) (Yeast).